Consider the following 228-residue polypeptide: E3 ubiquitin-protein ligase RNF114 (228 aa).

An RING-type zinc finger spans residues 29-68; it reads CPVCLEVYEKPVQVPCGHVFCSACLQECLKPKKPVCGVCR. Zn(2+)-binding residues include Cys91 and Cys94. The C2HC RNF-type zinc finger occupies 91–110; it reads CHGCRKKFFLSKIRSHVATC. Position 102 is an N6-acetyllysine (Lys102). Zn(2+)-binding residues include His106 and Cys110. The residue at position 112 (Lys112) is an N6-acetyllysine.

In terms of assembly, interacts with XAF1, the interaction increases XAF1 stability and proapoptotic effects, and may regulate IFN signaling. Post-translationally, autoubiquitinated. Polyubiquitinated in the presence of E2 enzymes UBE2D1, UBE2D2 and UBE2D3, but only monoubiquitinated in the presence of UBE2E1.

It is found in the cytoplasm. Its subcellular location is the nucleus. It carries out the reaction S-ubiquitinyl-[E2 ubiquitin-conjugating enzyme]-L-cysteine + [acceptor protein]-L-lysine = [E2 ubiquitin-conjugating enzyme]-L-cysteine + N(6)-ubiquitinyl-[acceptor protein]-L-lysine.. It participates in protein modification; protein ubiquitination. Its function is as follows. E3 ubiquitin-protein ligase that promotes the ubiquitination of various substrates. In turn, participates in the regulation of many biological processes including cell cycle, apoptosis, osteoclastogenesis as well as innate or adaptive immunity. Acts as negative regulator of NF-kappa-B-dependent transcription by promoting the ubiquitination and stabilization of the NF-kappa-B inhibitor TNFAIP3. May promote the ubiquitination of TRAF6 as well. Also acts as a negative regulator of T-cell activation. Inhibits cellular dsRNA responses and interferon production by targeting MAVS component for proteasomal degradation. Ubiquitinates the CDK inhibitor CDKN1A leading to its degradationand probably also CDKN1B and CDKN1C. This activity stimulates cell cycle G1-to-S phase transition and suppresses cellular senescence. May play a role in spermatogenesis. In Pan troglodytes (Chimpanzee), this protein is E3 ubiquitin-protein ligase RNF114 (RNF114).